A 558-amino-acid chain; its full sequence is uncharacterized protein (558 aa).

A run of 5 helical transmembrane segments spans residues 15-32 (PSVT…ALGL), 39-61 (IGTI…HFGV), 76-95 (LVIF…FPSL), 104-126 (LISL…ILGI), and 166-188 (MALA…LALL). RCK C-terminal domains follow at residues 196-278 (EERD…LFGK) and 286-370 (RPDI…ILGD). A run of 5 helical transmembrane segments spans residues 383 to 405 (LFGG…GVSM), 409 to 426 (LGLA…GAFG), 446 to 468 (FGII…DTII), 473 to 495 (LLWV…WASI), and 533 to 555 (VVYA…IMIL).

This sequence belongs to the AAE transporter (TC 2.A.81) family.

Its subcellular location is the cell membrane. This is an uncharacterized protein from Porphyromonas gingivalis (strain ATCC BAA-308 / W83).